A 410-amino-acid polypeptide reads, in one-letter code: Imidazolonepropionase (410 aa).

Positions 73 and 75 each coordinate Fe(3+). Zn(2+)-binding residues include H73 and H75. 3 residues coordinate 4-imidazolone-5-propanoate: R82, Y145, and H178. Y145 lines the N-formimidoyl-L-glutamate pocket. H243 lines the Fe(3+) pocket. H243 contributes to the Zn(2+) binding site. Q246 contributes to the 4-imidazolone-5-propanoate binding site. Fe(3+) is bound at residue D318. D318 contacts Zn(2+). N320 and G322 together coordinate N-formimidoyl-L-glutamate. S323 is a binding site for 4-imidazolone-5-propanoate.

The protein belongs to the metallo-dependent hydrolases superfamily. HutI family. It depends on Zn(2+) as a cofactor. Requires Fe(3+) as cofactor.

It is found in the cytoplasm. The catalysed reaction is 4-imidazolone-5-propanoate + H2O = N-formimidoyl-L-glutamate. It participates in amino-acid degradation; L-histidine degradation into L-glutamate; N-formimidoyl-L-glutamate from L-histidine: step 3/3. In terms of biological role, catalyzes the hydrolytic cleavage of the carbon-nitrogen bond in imidazolone-5-propanoate to yield N-formimidoyl-L-glutamate. It is the third step in the universal histidine degradation pathway. This is Imidazolonepropionase from Shewanella frigidimarina (strain NCIMB 400).